Here is a 623-residue protein sequence, read N- to C-terminus: Chaperone protein HtpG (623 aa).

Residues 1–336 (MVSKQQTMGF…ASDLPLNISR (336 aa)) form an a; substrate-binding region. A b region spans residues 337–550 (EILQDNKQVE…EQDMGLEMQR (214 aa)). The interval 551 to 623 (ILQAAGQQVP…NRVNRLLVSS (73 aa)) is c.

Belongs to the heat shock protein 90 family. Homodimer.

Its subcellular location is the cytoplasm. Functionally, molecular chaperone. Has ATPase activity. This is Chaperone protein HtpG from Legionella pneumophila subsp. pneumophila (strain Philadelphia 1 / ATCC 33152 / DSM 7513).